The sequence spans 498 residues: Tryptophan decarboxylase TDC2 (498 aa).

At Lys-316 the chain carries N6-(pyridoxal phosphate)lysine.

Belongs to the group II decarboxylase family. It depends on pyridoxal 5'-phosphate as a cofactor.

It catalyses the reaction L-tryptophan + H(+) = tryptamine + CO2. In terms of biological role, involved in the biosynthesis of tryptamine. Supplies tryptamine for the indole moiety of camptothecin (CPT), an anti-cancer monoterpene alkaloid. Represents a key step in monoterpene indole alkaloid biosynthesis. Is specific for tryptophan, and inactive against tyrosine, phenylalanine and 3,4-dihydroxyphenylalanine (dopa). This Camptotheca acuminata (Happy tree) protein is Tryptophan decarboxylase TDC2.